We begin with the raw amino-acid sequence, 227 residues long: Cleavage and polyadenylation specificity factor subunit 5 (227 aa).

An N-acetylserine modification is found at Ser-2. A necessary for RNA-binding region spans residues 2–147; sequence SVVPPNRSQT…DWVIDDCIGN (146 aa). The residue at position 15 (Arg-15) is an Omega-N-methylarginine. Lys-23 and Lys-29 each carry N6-acetyllysine. The residue at position 40 (Tyr-40) is a Phosphotyrosine. An N6-acetyllysine modification is found at Lys-56. Residues 76 to 201 form the Nudix hydrolase domain; sequence MRRTVEGVLI…KLVAAPLFEL (126 aa). The segment at 81 to 160 is necessary for interactions with PAPOLA and PABPN1; it reads EGVLIVHEHR…PNFEPPQYPY (80 aa). Positions 102–104 are interaction with RNA; it reads TFF. A Nudix box motif is present at residues 109 to 130; sequence GELNPGEDEVEGLKRLMTEILG.

It belongs to the Nudix hydrolase family. CPSF5 subfamily. In terms of assembly, homodimer (via N- and C-terminus); binds RNA as homodimer. Component of the cleavage factor Im (CFIm) complex which is a heterotetramer composed of two subunits of NUDT21/CPSF5 and two subunits of CPSF6 or CPSF7 or a heterodimer of CPSF6 and CPSF7. The cleavage factor Im (CFIm) complex associates with the CPSF and CSTF complexes to promote the assembly of the core mRNA 3'-processing machinery. Interacts with CPSF6 (via the RRM domain); this interaction is direct and enhances binding to RNA. Interacts with CPSF7. Interacts with FIP1L1; this interaction occurs in a RNA sequence-specific manner. Interacts with PABPN1. Interacts (via N-terminus) with PAPOLA (via C-terminus); this interaction is direct and diminished by acetylation. Interacts with SNRNP70. Interacts with VIRMA. Post-translationally, acetylated mainly by p300/CBP, recruited to the complex by CPSF6. Acetylation decreases interaction with PAPAO. Deacetylated by the class I/II HDACs, HDAC1, HDAC3 and HDAC10, and by the class III HDACs, SIRT1 and SIRT2. As to expression, expressed in testis. Expressed in male germ cells (at protein level).

It localises to the nucleus. It is found in the cytoplasm. Functionally, component of the cleavage factor Im (CFIm) complex that functions as an activator of the pre-mRNA 3'-end cleavage and polyadenylation processing required for the maturation of pre-mRNA into functional mRNAs. CFIm contributes to the recruitment of multiprotein complexes on specific sequences on the pre-mRNA 3'-end, so called cleavage and polyadenylation signals (pA signals). Most pre-mRNAs contain multiple pA signals, resulting in alternative cleavage and polyadenylation (APA) producing mRNAs with variable 3'-end formation. The CFIm complex acts as a key regulator of cleavage and polyadenylation site choice during APA through its binding to 5'-UGUA-3' elements localized in the 3'-untranslated region (UTR) for a huge number of pre-mRNAs. NUDT21/CPSF5 activates indirectly the mRNA 3'-processing machinery by recruiting CPSF6 and/or CPSF7. Binds to 5'-UGUA-3' elements localized upstream of pA signals that act as enhancers of pre-mRNA 3'-end processing. The homodimer mediates simultaneous sequence-specific recognition of two 5'-UGUA-3' elements within the pre-mRNA. Plays a role in somatic cell fate transitions and pluripotency by regulating widespread changes in gene expression through an APA-dependent function. Binds to chromatin. Binds to, but does not hydrolyze mono- and di-adenosine nucleotides. The protein is Cleavage and polyadenylation specificity factor subunit 5 of Mus musculus (Mouse).